A 250-amino-acid polypeptide reads, in one-letter code: Probable S-methyl-5'-thioinosine phosphorylase (250 aa).

Phosphate-binding positions include Thr14 and 56–57 (RH). Met189 contacts substrate. Residue Thr190 participates in phosphate binding. Residue 213–215 (NWA) coordinates substrate.

Belongs to the PNP/MTAP phosphorylase family. MTAP subfamily. As to quaternary structure, homotrimer.

The catalysed reaction is S-methyl-5'-thioinosine + phosphate = 5-(methylsulfanyl)-alpha-D-ribose 1-phosphate + hypoxanthine. Its pathway is purine metabolism; purine nucleoside salvage. Catalyzes the reversible phosphorylation of S-methyl-5'-thioinosine (MTI) to hypoxanthine and 5-methylthioribose-1-phosphate. Involved in the breakdown of S-methyl-5'-thioadenosine (MTA), a major by-product of polyamine biosynthesis. Catabolism of (MTA) occurs via deamination to MTI and phosphorolysis to hypoxanthine. This is Probable S-methyl-5'-thioinosine phosphorylase from Xanthomonas campestris pv. campestris (strain ATCC 33913 / DSM 3586 / NCPPB 528 / LMG 568 / P 25).